A 66-amino-acid chain; its full sequence is Beta-toxin ChFII.9 (66 aa).

Residues 1-66 form the LCN-type CS-alpha/beta domain; the sequence is KEGYIVDYHT…VWPLPNKRCK (66 aa). 4 disulfides stabilise this stretch: Cys-12–Cys-65, Cys-16–Cys-41, Cys-25–Cys-46, and Cys-29–Cys-48. Position 66 is a lysine amide (Lys-66).

Expressed by the venom gland.

The protein localises to the secreted. Its function is as follows. Beta toxins bind voltage independently at site-4 of sodium channels (Nav) and shift the activation voltage toward more negative potentials, thereby affecting sodium channel activation CC and promoting spontaneous and repetitive firing. The chain is Beta-toxin ChFII.9 from Centruroides hirsutipalpus (Scorpion).